The following is a 513-amino-acid chain: Zinc finger CCCH-type with G patch domain-containing protein (513 aa).

N-acetylmethionine is present on M1. Residues 92–131 (PVAPGAELETVPSRETGPGPTEPGQEEDDGEDEEGGAALS) are disordered. Positions 115-126 (GQEEDDGEDEEG) are enriched in acidic residues. A C3H1-type zinc finger spans residues 176 to 202 (KSLKPCPFFLEGKCRFQENCRFSHGQV). Residues 267 to 298 (LPPLRTDPAGSSDSDGSDADDPSYARVVEPGA) form a disordered region. Phosphoserine is present on residues S278 and S355. The 47-residue stretch at 315–361 (TRGIGSRLLAKMGYEFGKGLGRRADGRVEPVHAVVLPRGKSLDQCAE) folds into the G-patch domain. Disordered stretches follow at residues 367–394 (TRAG…PPPR) and 493–513 (QEAG…MTEF). The segment covering 497–513 (LQREQRKADTHKKMTEF) has biased composition (basic and acidic residues).

Interacts with CHD4/Mi-2; the interaction is direct.

The protein localises to the nucleus. Its function is as follows. Transcription repressor that specifically binds the 5'-GGAG[GA]A[GA]A-3' consensus sequence. Represses transcription by recruiting the chromatin multiprotein complex NuRD to target promoters. Negatively regulates expression of EGFR, a gene involved in cell proliferation, survival and migration. Its ability to repress genes of the EGFR pathway suggest it may act as a tumor suppressor. This chain is Zinc finger CCCH-type with G patch domain-containing protein (ZGPAT), found in Ovis aries (Sheep).